A 341-amino-acid chain; its full sequence is RNA 3'-terminal phosphate cyclase (341 aa).

ATP is bound by residues Q102 and 283 to 287; that span reads HLADQ. The active-site Tele-AMP-histidine intermediate is H308.

The protein belongs to the RNA 3'-terminal cyclase family. Type 1 subfamily.

Its subcellular location is the cytoplasm. The catalysed reaction is a 3'-end 3'-phospho-ribonucleotide-RNA + ATP = a 3'-end 2',3'-cyclophospho-ribonucleotide-RNA + AMP + diphosphate. Its function is as follows. Catalyzes the conversion of 3'-phosphate to a 2',3'-cyclic phosphodiester at the end of RNA. The mechanism of action of the enzyme occurs in 3 steps: (A) adenylation of the enzyme by ATP; (B) transfer of adenylate to an RNA-N3'P to produce RNA-N3'PP5'A; (C) and attack of the adjacent 2'-hydroxyl on the 3'-phosphorus in the diester linkage to produce the cyclic end product. The biological role of this enzyme is unknown but it is likely to function in some aspects of cellular RNA processing. The protein is RNA 3'-terminal phosphate cyclase of Pseudomonas aeruginosa (strain LESB58).